Here is a 971-residue protein sequence, read N- to C-terminus: Zinc finger CCCH domain-containing protein 7A (971 aa).

TPR repeat units lie at residues 43-76 (VRNL…ADYA), 89-122 (EKLY…NASN), and 124-156 (KALY…VPQD). Phosphothreonine is present on T210. 2 C3H1-type zinc fingers span residues 634–656 (LCRH…HSLV) and 769–797 (PLQF…HSPE). The segment at 857 to 881 (FHCWMCGKNCNSEKQWQGHISSEKH) adopts a C2H2-type zinc-finger fold. The C3H1-type 3 zinc finger occupies 906–928 (ICDRYMNGTCPEGNSCKFAHGNA). The stretch at 924–952 (AHGNAELHEWEERRDALKMKLNKARKDHL) forms a coiled coil.

It is found in the nucleus. Functionally, may be a specific regulator of miRNA biogenesis. Binds to microRNAs MIR7-1, MIR16-2 and MIR29A hairpins recognizing the 3'-ATA(A/T)-5' motif in the apical loop. This chain is Zinc finger CCCH domain-containing protein 7A (ZC3H7A), found in Homo sapiens (Human).